The chain runs to 394 residues: Flap endonuclease 1 (394 aa).

The N-domain stretch occupies residues 1-103 (MGIKSLYQII…GELAKRTMRK (103 aa)). Aspartate 34 contacts Mg(2+). Residue arginine 69 participates in DNA binding. Aspartate 85 is a Mg(2+) binding site. Residues 102-123 (RKAEAQEAAEEAKETGTAEDVE) are disordered. Positions 121 to 252 (DVEKFSRRTV…NTALKMIRDH (132 aa)) are I-domain. Glutamate 157, glutamate 159, aspartate 178, and aspartate 180 together coordinate Mg(2+). Glutamate 157 serves as a coordination point for DNA. Positions 230 and 232 each coordinate DNA. A Mg(2+)-binding site is contributed by aspartate 232. The interaction with PCNA stretch occupies residues 340-348 (QQSRLEGFF). Residues 349 to 394 (KPVAKTEQQKATAKRKAEEKAELAKKKKKEDAKAKRAMGAKPRGAR) are disordered. Over residues 363 to 382 (RKAEEKAELAKKKKKEDAKA) the composition is skewed to basic and acidic residues. The segment covering 383-394 (KRAMGAKPRGAR) has biased composition (basic residues).

Belongs to the XPG/RAD2 endonuclease family. FEN1 subfamily. In terms of assembly, interacts with PCNA. Three molecules of FEN1 bind to one PCNA trimer with each molecule binding to one PCNA monomer. PCNA stimulates the nuclease activity without altering cleavage specificity. Mg(2+) serves as cofactor. Post-translationally, phosphorylated. Phosphorylation upon DNA damage induces relocalization to the nuclear plasma.

The protein resides in the nucleus. It is found in the nucleolus. It localises to the nucleoplasm. The protein localises to the mitochondrion. In terms of biological role, structure-specific nuclease with 5'-flap endonuclease and 5'-3' exonuclease activities involved in DNA replication and repair. During DNA replication, cleaves the 5'-overhanging flap structure that is generated by displacement synthesis when DNA polymerase encounters the 5'-end of a downstream Okazaki fragment. It enters the flap from the 5'-end and then tracks to cleave the flap base, leaving a nick for ligation. Also involved in the long patch base excision repair (LP-BER) pathway, by cleaving within the apurinic/apyrimidinic (AP) site-terminated flap. Acts as a genome stabilization factor that prevents flaps from equilibrating into structures that lead to duplications and deletions. Also possesses 5'-3' exonuclease activity on nicked or gapped double-stranded DNA, and exhibits RNase H activity. Also involved in replication and repair of rDNA and in repairing mitochondrial DNA. This is Flap endonuclease 1 from Arthroderma otae (strain ATCC MYA-4605 / CBS 113480) (Microsporum canis).